The chain runs to 366 residues: 3-dehydroquinate synthase (366 aa).

Residues 71-76, 105-109, 129-130, K142, K151, and 169-172 each bind NAD(+); these read DGEQYK, GVIGD, TT, and CLKT. Zn(2+) contacts are provided by E184, H247, and H264.

This sequence belongs to the sugar phosphate cyclases superfamily. Dehydroquinate synthase family. Co(2+) is required as a cofactor. The cofactor is Zn(2+). It depends on NAD(+) as a cofactor.

The protein localises to the cytoplasm. The catalysed reaction is 7-phospho-2-dehydro-3-deoxy-D-arabino-heptonate = 3-dehydroquinate + phosphate. It functions in the pathway metabolic intermediate biosynthesis; chorismate biosynthesis; chorismate from D-erythrose 4-phosphate and phosphoenolpyruvate: step 2/7. Its function is as follows. Catalyzes the conversion of 3-deoxy-D-arabino-heptulosonate 7-phosphate (DAHP) to dehydroquinate (DHQ). This chain is 3-dehydroquinate synthase, found in Serratia proteamaculans (strain 568).